The chain runs to 80 residues: Large ribosomal subunit protein bL31B (80 aa).

It belongs to the bacterial ribosomal protein bL31 family. Type B subfamily. Part of the 50S ribosomal subunit.

This Streptococcus thermophilus (strain CNRZ 1066) protein is Large ribosomal subunit protein bL31B.